Here is a 186-residue protein sequence, read N- to C-terminus: ATP synthase subunit delta (186 aa).

This sequence belongs to the ATPase delta chain family. As to quaternary structure, F-type ATPases have 2 components, F(1) - the catalytic core - and F(0) - the membrane proton channel. F(1) has five subunits: alpha(3), beta(3), gamma(1), delta(1), epsilon(1). CF(0) has four main subunits: a(1), b(1), b'(1) and c(10-14). The alpha and beta chains form an alternating ring which encloses part of the gamma chain. F(1) is attached to F(0) by a central stalk formed by the gamma and epsilon chains, while a peripheral stalk is formed by the delta, b and b' chains.

The protein localises to the cell inner membrane. In terms of biological role, f(1)F(0) ATP synthase produces ATP from ADP in the presence of a proton or sodium gradient. F-type ATPases consist of two structural domains, F(1) containing the extramembraneous catalytic core and F(0) containing the membrane proton channel, linked together by a central stalk and a peripheral stalk. During catalysis, ATP synthesis in the catalytic domain of F(1) is coupled via a rotary mechanism of the central stalk subunits to proton translocation. This protein is part of the stalk that links CF(0) to CF(1). It either transmits conformational changes from CF(0) to CF(1) or is implicated in proton conduction. The sequence is that of ATP synthase subunit delta from Cereibacter sphaeroides (strain ATCC 17025 / ATH 2.4.3) (Rhodobacter sphaeroides).